A 43-amino-acid chain; its full sequence is Photosystem II reaction center protein Psb30 (43 aa).

The helical transmembrane segment at 15 to 35 threads the bilayer; that stretch reads VIFQLTFVSLILISGPVVIFL.

Belongs to the Psb30/Ycf12 family. PSII is composed of 1 copy each of membrane proteins PsbA, PsbB, PsbC, PsbD, PsbE, PsbF, PsbH, PsbI, PsbJ, PsbK, PsbL, PsbM, PsbT, PsbX, PsbY, PsbZ, Psb30/Ycf12, peripheral proteins PsbO, CyanoQ (PsbQ), PsbU, PsbV and a large number of cofactors. It forms dimeric complexes.

The protein localises to the cellular thylakoid membrane. In terms of biological role, a core subunit of photosystem II (PSII), probably helps stabilize the reaction center. The chain is Photosystem II reaction center protein Psb30 from Picosynechococcus sp. (strain ATCC 27264 / PCC 7002 / PR-6) (Agmenellum quadruplicatum).